The following is a 403-amino-acid chain: 4-hydroxy-3-methylbut-2-en-1-yl diphosphate synthase (ferredoxin) (403 aa).

Residues C312, C315, C346, and E353 each coordinate [4Fe-4S] cluster.

It belongs to the IspG family. The cofactor is [4Fe-4S] cluster.

It carries out the reaction (2E)-4-hydroxy-3-methylbut-2-enyl diphosphate + 2 oxidized [2Fe-2S]-[ferredoxin] + H2O = 2-C-methyl-D-erythritol 2,4-cyclic diphosphate + 2 reduced [2Fe-2S]-[ferredoxin] + H(+). The protein operates within isoprenoid biosynthesis; isopentenyl diphosphate biosynthesis via DXP pathway; isopentenyl diphosphate from 1-deoxy-D-xylulose 5-phosphate: step 5/6. Its function is as follows. Converts 2C-methyl-D-erythritol 2,4-cyclodiphosphate (ME-2,4cPP) into 1-hydroxy-2-methyl-2-(E)-butenyl 4-diphosphate. The protein is 4-hydroxy-3-methylbut-2-en-1-yl diphosphate synthase (ferredoxin) of Synechocystis sp. (strain ATCC 27184 / PCC 6803 / Kazusa).